Here is a 248-residue protein sequence, read N- to C-terminus: UPF0246 protein lp_0089 (248 aa).

Belongs to the UPF0246 family.

The protein is UPF0246 protein lp_0089 of Lactiplantibacillus plantarum (strain ATCC BAA-793 / NCIMB 8826 / WCFS1) (Lactobacillus plantarum).